The following is a 152-amino-acid chain: MPELLLLNGPNLNLLGTREPGIYGSDTLADIERRLGEQCAGAGVRFSAFQTNAEHALIDRIHQAGRAGVDFILINPGAWTHTSIALRDALLGVGIPFIEIHISNVHAREPFRRQSYLADVAVGVISGLGVHGYELALQAALKRLDGSPRGQH.

Y23 acts as the Proton acceptor in catalysis. Positions 75, 81, and 88 each coordinate substrate. H101 serves as the catalytic Proton donor. Substrate is bound by residues 102–103 (IS) and R112.

This sequence belongs to the type-II 3-dehydroquinase family. As to quaternary structure, homododecamer.

The enzyme catalyses 3-dehydroquinate = 3-dehydroshikimate + H2O. The protein operates within metabolic intermediate biosynthesis; chorismate biosynthesis; chorismate from D-erythrose 4-phosphate and phosphoenolpyruvate: step 3/7. In terms of biological role, catalyzes a trans-dehydration via an enolate intermediate. The chain is 3-dehydroquinate dehydratase from Alkalilimnicola ehrlichii (strain ATCC BAA-1101 / DSM 17681 / MLHE-1).